The primary structure comprises 745 residues: MFDVQREELIWGDRKLVLETGKTARQADGAVVATYGETTVLATVVAAKEPKAGIDFMPLTVNYQERAYAAGRIPGGYFKREGRPSEKETLVSRLIDRPIRPLFVEGWRNDTQVVVTVLSHDLENDPDIVSMVAASAALTLSGVPFMGPIGAARVGYLNGGYKLNPLVTEVAESTLDLVVAGTQDAVLMVESEAKELSEDVMLGAVMFGHKHFQPVIEAIIRLAEKAAKEPRDFSPPENADVEKAVLDICESELRDAYKITVKQDRYKAVDAVKAKVVAALCPAEGEQKFSPEKVKAAFKEAQSKVVRWNILDTGSRIDGRDVKTVRPIVSEVGVLPRAHGSSLFTRGETQALVVATLGTGEDEQFIDALEGTYKERFLLHYNFPPYSVGETGRMGSPGRREIGHGKLAWRAIRPVLPPAHEFPYTIRVVSEITESNGSSSMASVCGGSLSLMDAGVPLRRPVAGIAMGLILEGERFAVLSDILGDEDHLGDMDFKVAGTDEGITSLQMDIKIAGITEEIMRVALAQAKDGRAHILGEMAQALTAARPELGEYAPRIETMQIPTDKIRDVIGTGGKIIREIVEKTGAKINIEDTGVVKIASSDGKAIKAAYNWIRSIVAEPEAGTIYDGTIVKIMEFGAFVNFFGAKDGLVHISELAPQRVAKVGDVVKEGQKVKVKFLGADERGKIRLSMKVVDQETGEDITEKLKAERAERGEPEREERSDRGDRGDRGPRRDRGERRRESSGE.

Residues D487 and D493 each coordinate Mg(2+). Positions 554–613 constitute a KH domain; the sequence is PRIETMQIPTDKIRDVIGTGGKIIREIVEKTGAKINIEDTGVVKIASSDGKAIKAAYNWI. Positions 623–691 constitute an S1 motif domain; sequence GTIYDGTIVK…ERGKIRLSMK (69 aa). Residues 695-745 are disordered; it reads QETGEDITEKLKAERAERGEPEREERSDRGDRGDRGPRRDRGERRRESSGE. A compositionally biased stretch (basic and acidic residues) spans 701–745; sequence ITEKLKAERAERGEPEREERSDRGDRGDRGPRRDRGERRRESSGE.

It belongs to the polyribonucleotide nucleotidyltransferase family. Mg(2+) serves as cofactor.

The protein resides in the cytoplasm. The enzyme catalyses RNA(n+1) + phosphate = RNA(n) + a ribonucleoside 5'-diphosphate. Involved in mRNA degradation. Catalyzes the phosphorolysis of single-stranded polyribonucleotides processively in the 3'- to 5'-direction. The sequence is that of Polyribonucleotide nucleotidyltransferase from Methylorubrum populi (strain ATCC BAA-705 / NCIMB 13946 / BJ001) (Methylobacterium populi).